A 315-amino-acid chain; its full sequence is Holliday junction branch migration complex subunit RuvB (315 aa).

The interval 1–168 (MAKKQEIRPK…FGLIGQISNY (168 aa)) is large ATPase domain (RuvB-L). ATP contacts are provided by residues isoleucine 7, arginine 8, glycine 49, lysine 52, threonine 53, serine 54, 115–117 (EDF), arginine 158, tyrosine 168, and arginine 205. Residue threonine 53 participates in Mg(2+) binding. The tract at residues 169–239 (QVEDIEKIIK…LVNKTLKQLG (71 aa)) is small ATPAse domain (RuvB-S). Residues 242-315 (ENGLNESQVK…QKGISYLERI (74 aa)) are head domain (RuvB-H). 2 residues coordinate DNA: lysine 297 and arginine 302.

The protein belongs to the RuvB family. Homohexamer. Forms an RuvA(8)-RuvB(12)-Holliday junction (HJ) complex. HJ DNA is sandwiched between 2 RuvA tetramers; dsDNA enters through RuvA and exits via RuvB. An RuvB hexamer assembles on each DNA strand where it exits the tetramer. Each RuvB hexamer is contacted by two RuvA subunits (via domain III) on 2 adjacent RuvB subunits; this complex drives branch migration. In the full resolvosome a probable DNA-RuvA(4)-RuvB(12)-RuvC(2) complex forms which resolves the HJ.

It localises to the cytoplasm. It catalyses the reaction ATP + H2O = ADP + phosphate + H(+). Functionally, the RuvA-RuvB-RuvC complex processes Holliday junction (HJ) DNA during genetic recombination and DNA repair, while the RuvA-RuvB complex plays an important role in the rescue of blocked DNA replication forks via replication fork reversal (RFR). RuvA specifically binds to HJ cruciform DNA, conferring on it an open structure. The RuvB hexamer acts as an ATP-dependent pump, pulling dsDNA into and through the RuvAB complex. RuvB forms 2 homohexamers on either side of HJ DNA bound by 1 or 2 RuvA tetramers; 4 subunits per hexamer contact DNA at a time. Coordinated motions by a converter formed by DNA-disengaged RuvB subunits stimulates ATP hydrolysis and nucleotide exchange. Immobilization of the converter enables RuvB to convert the ATP-contained energy into a lever motion, pulling 2 nucleotides of DNA out of the RuvA tetramer per ATP hydrolyzed, thus driving DNA branch migration. The RuvB motors rotate together with the DNA substrate, which together with the progressing nucleotide cycle form the mechanistic basis for DNA recombination by continuous HJ branch migration. Branch migration allows RuvC to scan DNA until it finds its consensus sequence, where it cleaves and resolves cruciform DNA. This Mycoplasmopsis pulmonis (strain UAB CTIP) (Mycoplasma pulmonis) protein is Holliday junction branch migration complex subunit RuvB.